We begin with the raw amino-acid sequence, 269 residues long: Formamidopyrimidine-DNA glycosylase (269 aa).

The active-site Schiff-base intermediate with DNA is the proline 2. Residue glutamate 3 is the Proton donor of the active site. Lysine 57 acts as the Proton donor; for beta-elimination activity in catalysis. Positions 90, 109, and 150 each coordinate DNA. An FPG-type zinc finger spans residues 235–269 (QVYGREGEPCRVCGTPILAGKHAQRRTYWCRRCQK). The active-site Proton donor; for delta-elimination activity is the arginine 259.

The protein belongs to the FPG family. As to quaternary structure, monomer. Zn(2+) is required as a cofactor.

It catalyses the reaction Hydrolysis of DNA containing ring-opened 7-methylguanine residues, releasing 2,6-diamino-4-hydroxy-5-(N-methyl)formamidopyrimidine.. The enzyme catalyses 2'-deoxyribonucleotide-(2'-deoxyribose 5'-phosphate)-2'-deoxyribonucleotide-DNA = a 3'-end 2'-deoxyribonucleotide-(2,3-dehydro-2,3-deoxyribose 5'-phosphate)-DNA + a 5'-end 5'-phospho-2'-deoxyribonucleoside-DNA + H(+). Its function is as follows. Involved in base excision repair of DNA damaged by oxidation or by mutagenic agents. Acts as a DNA glycosylase that recognizes and removes damaged bases. Has a preference for oxidized purines, such as 7,8-dihydro-8-oxoguanine (8-oxoG). Has AP (apurinic/apyrimidinic) lyase activity and introduces nicks in the DNA strand. Cleaves the DNA backbone by beta-delta elimination to generate a single-strand break at the site of the removed base with both 3'- and 5'-phosphates. This Cronobacter sakazakii (strain ATCC BAA-894) (Enterobacter sakazakii) protein is Formamidopyrimidine-DNA glycosylase.